A 276-amino-acid chain; its full sequence is NH(3)-dependent NAD(+) synthetase (276 aa).

Residue 43 to 50 (GISGGVDS) participates in ATP binding. Aspartate 49 lines the Mg(2+) pocket. Deamido-NAD(+) is bound at residue arginine 146. Residue threonine 166 participates in ATP binding. Glutamate 171 contacts Mg(2+). Residues lysine 179 and aspartate 186 each coordinate deamido-NAD(+). Residues lysine 195 and threonine 217 each coordinate ATP. 266-267 (HK) contacts deamido-NAD(+).

It belongs to the NAD synthetase family. In terms of assembly, homodimer.

It catalyses the reaction deamido-NAD(+) + NH4(+) + ATP = AMP + diphosphate + NAD(+) + H(+). It participates in cofactor biosynthesis; NAD(+) biosynthesis; NAD(+) from deamido-NAD(+) (ammonia route): step 1/1. In terms of biological role, catalyzes the ATP-dependent amidation of deamido-NAD to form NAD. Uses ammonia as a nitrogen source. This Aliivibrio salmonicida (strain LFI1238) (Vibrio salmonicida (strain LFI1238)) protein is NH(3)-dependent NAD(+) synthetase.